A 377-amino-acid polypeptide reads, in one-letter code: uncharacterized protein (377 aa).

The tract at residues 1–25 is disordered; the sequence is MAQQTNVAGQKTEKQRKAPFRADHV. A compositionally biased stretch (basic and acidic residues) spans 11–24; sequence KTEKQRKAPFRADH.

To B.subtilis YxjG.

This is an uncharacterized protein from Bacillus subtilis (strain 168).